The chain runs to 527 residues: MADEKRLEDLRSKIMESIGKSEKDVVPIENKRFNTDNAVIDTHFKRQKSDGELPKAPKSRNVSHSNNRGPSSIITMSTNRTTYEQTRAGPHRQSYRDASGRSYNRENRYSSHNTGPQWNNNPYNRQRDERRGRNERFDRRGRNGNGNYDRFNYQRKNEGSKFNGDRDKRQLQTNKYDMNYNSQNVMYPGSSFDSPAYYNMASSKANSRLVISGLSQSSDPSIVARLKDLLENFISGLQKTESNAEDFKISNFYIGEGRPDHIIVEFSSQICSTMVLACRSFFNAKLGTFDLKWRRPNDYVQQLDHLVDFCRGTVIALENLENIGEGEDYRMKELFSSLNVTNGTAKPLFYKCSSNTNNTGKESEFTKCILLSFEVVTQDILDKLKPYKWFKPNDGKISQVTSWITFQSLPNLVTQSVRVESRVLLLLNCLDPLDLKDETFITEIKETLKYSIAGADTIKICQPGVDYRLNFENLASGAGNIYIKFKTLEAAKHAMEELPGTQFNDRTVLCTYIDEDDFDMMEATQLS.

A disordered region spans residues 36–169; it reads DNAVIDTHFK…SKFNGDRDKR (134 aa). Over residues 42–55 the composition is skewed to basic and acidic residues; the sequence is THFKRQKSDGELPK. At S49 the chain carries Phosphoserine. Residues 60 to 85 are compositionally biased toward polar residues; sequence RNVSHSNNRGPSSIITMSTNRTTYEQ. The span at 94-109 shows a compositional bias: basic and acidic residues; that stretch reads SYRDASGRSYNRENRY. Residues 110–122 show a composition bias toward polar residues; that stretch reads SSHNTGPQWNNNP. Basic and acidic residues-rich tracts occupy residues 125 to 141 and 155 to 169; these read RQRDERRGRNERFDRRG and RKNEGSKFNGDRDKR. The RRM domain maps to 424 to 511; the sequence is LLLLNCLDPL…QFNDRTVLCT (88 aa).

MSL5, MUD2 and PRP40 interact to form the commitment complex 2 (CC2), a precursor of mature spliceosomes.

In terms of biological role, splicing factor that contacts pre-mRNA directly and is a component of the pre-mRNA-U1 snRNP complex (commitment complex 2) that forms during early spliceosome assembly in yeast extracts. The chain is Splicing factor MUD2 (MUD2) from Saccharomyces cerevisiae (strain ATCC 204508 / S288c) (Baker's yeast).